The chain runs to 517 residues: Crotonobetaine/carnitine--CoA ligase (517 aa).

The protein belongs to the ATP-dependent AMP-binding enzyme family.

It carries out the reaction 4-(trimethylamino)butanoate + ATP + CoA = 4-(trimethylamino)butanoyl-CoA + AMP + diphosphate. The enzyme catalyses crotonobetaine + ATP + CoA = crotonobetainyl-CoA + AMP + diphosphate. It catalyses the reaction (R)-carnitine + ATP + CoA = (R)-carnitinyl-CoA + AMP + diphosphate. It functions in the pathway amine and polyamine metabolism; carnitine metabolism. Catalyzes the transfer of CoA to carnitine, generating the initial carnitinyl-CoA needed for the CaiB reaction cycle. Also has activity toward crotonobetaine and gamma-butyrobetaine. This is Crotonobetaine/carnitine--CoA ligase from Salmonella heidelberg (strain SL476).